Reading from the N-terminus, the 255-residue chain is Cytochrome c oxidase subunit 2 (255 aa).

Positions 1-16 are cleaved as a signal peptide; that stretch reads MFNLFPPFGANTAIFN. The Mitochondrial intermembrane portion of the chain corresponds to 17-43; the sequence is DAPQPWQVGFQDGASPTQEGITELHDS. A helical membrane pass occupies residues 44 to 64; it reads IFFYLVIICFGVLWVLSSVIV. Residues 65 to 80 lie on the Mitochondrial matrix side of the membrane; the sequence is NFNSNKSQLVYKYANH. Residues 81-101 form a helical membrane-spanning segment; it reads GTLIELIWTITPALVLIAIAF. Over 102-255 the chain is Mitochondrial intermembrane; sequence PSFKLLYLMD…KYLAWIDSQA (154 aa). The Cu cation site is built by His189, Cys224, Glu226, Cys228, His232, and Met235. Glu226 contributes to the Mg(2+) binding site.

This sequence belongs to the cytochrome c oxidase subunit 2 family. Component of the cytochrome c oxidase (complex IV, CIV), a multisubunit enzyme composed of a catalytic core of 3 subunits and several supernumerary subunits. The complex exists as a monomer or a dimer and forms supercomplexes (SCs) in the inner mitochondrial membrane with ubiquinol-cytochrome c oxidoreductase (cytochrome b-c1 complex, complex III, CIII). Requires Cu cation as cofactor.

It localises to the mitochondrion inner membrane. It carries out the reaction 4 Fe(II)-[cytochrome c] + O2 + 8 H(+)(in) = 4 Fe(III)-[cytochrome c] + 2 H2O + 4 H(+)(out). Functionally, component of the cytochrome c oxidase, the last enzyme in the mitochondrial electron transport chain which drives oxidative phosphorylation. The respiratory chain contains 3 multisubunit complexes succinate dehydrogenase (complex II, CII), ubiquinol-cytochrome c oxidoreductase (cytochrome b-c1 complex, complex III, CIII) and cytochrome c oxidase (complex IV, CIV), that cooperate to transfer electrons derived from NADH and succinate to molecular oxygen, creating an electrochemical gradient over the inner membrane that drives transmembrane transport and the ATP synthase. Cytochrome c oxidase is the component of the respiratory chain that catalyzes the reduction of oxygen to water. Electrons originating from reduced cytochrome c in the intermembrane space (IMS) are transferred via the dinuclear copper A center (CU(A)) of subunit 2 and heme A of subunit 1 to the active site in subunit 1, a binuclear center (BNC) formed by heme A3 and copper B (CU(B)). The BNC reduces molecular oxygen to 2 water molecules using 4 electrons from cytochrome c in the IMS and 4 protons from the mitochondrial matrix. The sequence is that of Cytochrome c oxidase subunit 2 (COX2) from Mycosarcoma maydis (Corn smut fungus).